A 44-amino-acid chain; its full sequence is Thymosin beta-12 (44 aa).

Basic and acidic residues-rich tracts occupy residues 1-25 (MSDK…ETQE) and 33-44 (ETIEQEKAAATS). The disordered stretch occupies residues 1–44 (MSDKPDISEVTSFDKTKLKKTETQEKNPLPSKETIEQEKAAATS). N-acetylserine is present on Ser2.

This sequence belongs to the thymosin beta family.

The protein resides in the cytoplasm. The protein localises to the cytoskeleton. Functionally, plays an important role in the organization of the cytoskeleton. Binds to and sequesters actin monomers (G actin) and therefore inhibits actin polymerization. This Lateolabrax japonicus (Japanese sea perch) protein is Thymosin beta-12.